Here is a 365-residue protein sequence, read N- to C-terminus: GTPase Obg (365 aa).

In terms of domain architecture, Obg spans 1–159 (MKFIDEARIE…RMLKLELKVL (159 aa)). The region spanning 160–334 (ADVGLLGMPN…LVYAIKDHLA (175 aa)) is the OBG-type G domain. Residues 166–173 (GMPNAGKS), 191–195 (FTTLH), 213–216 (DIPG), 284–287 (NKLD), and 315–317 (SAL) each bind GTP. Mg(2+) contacts are provided by Ser173 and Thr193.

It belongs to the TRAFAC class OBG-HflX-like GTPase superfamily. OBG GTPase family. Monomer. Requires Mg(2+) as cofactor.

It is found in the cytoplasm. Its function is as follows. An essential GTPase which binds GTP, GDP and possibly (p)ppGpp with moderate affinity, with high nucleotide exchange rates and a fairly low GTP hydrolysis rate. Plays a role in control of the cell cycle, stress response, ribosome biogenesis and in those bacteria that undergo differentiation, in morphogenesis control. In Cupriavidus metallidurans (strain ATCC 43123 / DSM 2839 / NBRC 102507 / CH34) (Ralstonia metallidurans), this protein is GTPase Obg.